We begin with the raw amino-acid sequence, 184 residues long: Late embryogenesis abundant protein (184 aa).

Residues threonine 49–proline 184 are disordered. The span at proline 60–glycine 86 shows a compositional bias: low complexity. Basic and acidic residues-rich tracts occupy residues glutamine 87–arginine 98 and lysine 122–glutamine 138. The span at threonine 139–alanine 159 shows a compositional bias: low complexity. The segment covering aspartate 160 to proline 177 has biased composition (basic and acidic residues).

It belongs to the plant dehydrin family.

LEA protein are late embryogenesis abundant in higher plant seed embryos. There are two subsets of LEA proteins (5a, and 5b), the first ones are expressed when the cotyledon weight reach 80 mg and the second set are expressed above 100 mg. The function of those proteins is not known. The sequence is that of Late embryogenesis abundant protein from Raphanus sativus (Radish).